The following is a 78-amino-acid chain: Small ribosomal subunit protein bS18 (78 aa).

The protein belongs to the bacterial ribosomal protein bS18 family. Part of the 30S ribosomal subunit. Forms a tight heterodimer with protein bS6.

Binds as a heterodimer with protein bS6 to the central domain of the 16S rRNA, where it helps stabilize the platform of the 30S subunit. The protein is Small ribosomal subunit protein bS18 of Beutenbergia cavernae (strain ATCC BAA-8 / DSM 12333 / CCUG 43141 / JCM 11478 / NBRC 16432 / NCIMB 13614 / HKI 0122).